The primary structure comprises 422 residues: Nuclear hormone receptor family member nhr-54 (422 aa).

A DNA-binding region (nuclear receptor) is located at residues 14–92 (SVKCAICYKA…LGMTTENVRT (79 aa)). NR C4-type zinc fingers lie at residues 17 to 37 (CAIC…CRAC) and 53 to 80 (CTRK…FKKC). The 262-residue stretch at 161–422 (PDDDVIVELN…VFTEPEFFRV (262 aa)) folds into the NR LBD domain.

This sequence belongs to the nuclear hormone receptor family.

It localises to the nucleus. In terms of biological role, orphan nuclear receptor. The chain is Nuclear hormone receptor family member nhr-54 (nhr-54) from Caenorhabditis elegans.